A 1328-amino-acid chain; its full sequence is Retrovirus-related Pol polyprotein from transposon TNT 1-94 (1328 aa).

Residues 189–265 are disordered; sequence PENQGQALIT…SGQKNDDNTA (77 aa). Residues 217–229 show a composition bias toward basic residues; sequence ARGKSKNRSKSRV. The CCHC-type zinc finger occupies 230-247; the sequence is RNCYNCNQPGHFKRDCPN. Residues 241–253 show a composition bias toward basic and acidic residues; sequence FKRDCPNPRKGKG. Catalysis depends on aspartate 297, which acts as the For protease activity. Positions 473–642 constitute an Integrase catalytic domain; sequence SSERKLNILD…IPERVWTNKE (170 aa). Over residues 729-742 the composition is skewed to polar residues; the sequence is TIPSTSNNPTSAES. Residues 729–800 form a disordered region; sequence TIPSTSNNPT…RVESRRYPST (72 aa). The segment covering 770 to 798 has biased composition (basic and acidic residues); sequence EVEHPTQGEEQHQPLRRSERPRVESRRYP.

It catalyses the reaction DNA(n) + a 2'-deoxyribonucleoside 5'-triphosphate = DNA(n+1) + diphosphate. The protein is Retrovirus-related Pol polyprotein from transposon TNT 1-94 of Nicotiana tabacum (Common tobacco).